The primary structure comprises 295 residues: MVSLLRRTFSEEIKEELVNVPFGSREEVISELLGFIKARGDLDVKSRHIVFSLHSFAASRRLLNLMKYLSKPVSEIIVEKSHNIKKRYIKITAEYSESFMVIEPFFDVALFVSFLRGLFLSGGSMTNPRYHYHLEINLFEEETLALTRKSLKDFFNINAGIIELRNTRKLYIKSIKDILVFLEAIGVQRKLEEIDRIVTERKVIGDVNRTVNFIEANAIRTANSTARQIRAIELIKENMGLENLPEDLRRVALVRLRNKELSLRELGKKLNLTKSQIYSKLKRIIKIAERFGDVK.

Residues 262 to 293 constitute a DNA-binding region (H-T-H motif); sequence SLRELGKKLNLTKSQIYSKLKRIIKIAERFGD.

This sequence belongs to the WhiA family.

Functionally, involved in cell division and chromosome segregation. This chain is Probable cell division protein WhiA, found in Thermotoga maritima (strain ATCC 43589 / DSM 3109 / JCM 10099 / NBRC 100826 / MSB8).